We begin with the raw amino-acid sequence, 255 residues long: 5'-nucleotidase SurE (255 aa).

Positions 16, 17, 47, and 100 each coordinate a divalent metal cation.

It belongs to the SurE nucleotidase family. It depends on a divalent metal cation as a cofactor.

Its subcellular location is the cytoplasm. It catalyses the reaction a ribonucleoside 5'-phosphate + H2O = a ribonucleoside + phosphate. Nucleotidase that shows phosphatase activity on nucleoside 5'-monophosphates. The protein is 5'-nucleotidase SurE of Vibrio vulnificus (strain YJ016).